We begin with the raw amino-acid sequence, 308 residues long: 2-methylisocitrate lyase (308 aa).

54 to 56 (SGG) contributes to the substrate binding site. Residues Asp94 and Asp96 each contribute to the Mg(2+) site. Residues 131–132 (CG), Arg166, Glu196, 224–226 (NIT), Arg255, and Arg284 each bind substrate.

The protein belongs to the isocitrate lyase/PEP mutase superfamily. Methylisocitrate lyase family. Homotetramer; dimer of dimers. It depends on Mg(2+) as a cofactor.

It catalyses the reaction (2S,3R)-3-hydroxybutane-1,2,3-tricarboxylate = pyruvate + succinate. Its pathway is organic acid metabolism; propanoate degradation. Involved in the catabolism of short chain fatty acids (SCFA) via the 2-methylcitrate cycle I (propionate degradation route). Catalyzes the thermodynamically favored C-C bond cleavage reaction of (2R,3S)-2-methylisocitrate to yield pyruvate and succinate via an alpha-carboxy-carbanion intermediate. In Vibrio cholerae serotype O1 (strain ATCC 39315 / El Tor Inaba N16961), this protein is 2-methylisocitrate lyase.